The following is a 434-amino-acid chain: Probable phosphatidylinositol 3,4,5-trisphosphate 3-phosphatase TEP1 (434 aa).

The 223-residue stretch at 33 to 255 (KTKNDIGLRL…RYHEFFITHE (223 aa)) folds into the Phosphatase tensin-type domain. Catalysis depends on Cys-193, which acts as the Phosphocysteine intermediate.

The enzyme catalyses a 1,2-diacyl-sn-glycero-3-phospho-(1D-myo-inositol-3,4,5-trisphosphate) + H2O = a 1,2-diacyl-sn-glycero-3-phospho-(1D-myo-inositol-4,5-bisphosphate) + phosphate. Functionally, may act as a phosphoinositide 3-phosphatase by regulating PtdIns(3,4,5)P3 levels. This Saccharomyces cerevisiae (strain ATCC 204508 / S288c) (Baker's yeast) protein is Probable phosphatidylinositol 3,4,5-trisphosphate 3-phosphatase TEP1 (TEP1).